The primary structure comprises 367 residues: Uroporphyrinogen decarboxylase (367 aa).

N-acetylmethionine is present on M1. 8 residues coordinate coproporphyrinogen I: R37, A39, R41, R50, D86, Y164, S219, and H339. Coproporphyrinogen III contacts are provided by R37, A39, and R41. Residues D86, Y164, S219, and H339 each coordinate coproporphyrinogen III.

The protein belongs to the uroporphyrinogen decarboxylase family. Homodimer.

The protein resides in the cytoplasm. It is found in the cytosol. It carries out the reaction uroporphyrinogen III + 4 H(+) = coproporphyrinogen III + 4 CO2. It catalyses the reaction uroporphyrinogen I + 4 H(+) = coproporphyrinogen I + 4 CO2. Its pathway is porphyrin-containing compound metabolism; protoporphyrin-IX biosynthesis; coproporphyrinogen-III from 5-aminolevulinate: step 4/4. Its function is as follows. Catalyzes the sequential decarboxylation of the four acetate side chains of uroporphyrinogen to form coproporphyrinogen and participates in the fifth step in the heme biosynthetic pathway. Isomer I or isomer III of uroporphyrinogen may serve as substrate, but only coproporphyrinogen III can ultimately be converted to heme. In vitro also decarboxylates pentacarboxylate porphyrinogen I. This Ovis aries (Sheep) protein is Uroporphyrinogen decarboxylase.